Reading from the N-terminus, the 344-residue chain is 4-hydroxy-3-methylbut-2-en-1-yl diphosphate synthase (flavodoxin) (344 aa).

4 residues coordinate [4Fe-4S] cluster: Cys253, Cys256, Cys288, and Glu295.

Belongs to the IspG family. [4Fe-4S] cluster serves as cofactor.

It catalyses the reaction (2E)-4-hydroxy-3-methylbut-2-enyl diphosphate + oxidized [flavodoxin] + H2O + 2 H(+) = 2-C-methyl-D-erythritol 2,4-cyclic diphosphate + reduced [flavodoxin]. It functions in the pathway isoprenoid biosynthesis; isopentenyl diphosphate biosynthesis via DXP pathway; isopentenyl diphosphate from 1-deoxy-D-xylulose 5-phosphate: step 5/6. Converts 2C-methyl-D-erythritol 2,4-cyclodiphosphate (ME-2,4cPP) into 1-hydroxy-2-methyl-2-(E)-butenyl 4-diphosphate. The sequence is that of 4-hydroxy-3-methylbut-2-en-1-yl diphosphate synthase (flavodoxin) from Thermotoga maritima (strain ATCC 43589 / DSM 3109 / JCM 10099 / NBRC 100826 / MSB8).